Reading from the N-terminus, the 245-residue chain is E3 ubiquitin-protein ligase RNF138 (245 aa).

The RING-type zinc finger occupies 18–58 (CPVCQEVLKTPVRTAACQHVFCRKCFLTAMRESGIHCPLCR). 4 residues coordinate Zn(2+): cysteine 86, cysteine 89, histidine 101, and cysteine 105. The C2HC RNF-type zinc-finger motif lies at 86-105 (CRCCSKKIKFYRMRHHYKSC). The interval 128 to 154 (VRSSNRSETSASDNTETYQEDTSSSGH) is disordered. Threonine 142 is modified (phosphothreonine). C2H2-type zinc fingers lie at residues 157–180 (FKCP…NSNH) and 187–215 (VTCP…NQRH). Residues 225–243 (LQLDEETQYQTAVEESFQV) enclose the UIM domain.

In terms of assembly, interacts with NLK. Interacts with XRCC5/Ku80. Interacts with RBBP8/CtIP. Auto-ubiquitinated.

The protein localises to the chromosome. The enzyme catalyses S-ubiquitinyl-[E2 ubiquitin-conjugating enzyme]-L-cysteine + [acceptor protein]-L-lysine = [E2 ubiquitin-conjugating enzyme]-L-cysteine + N(6)-ubiquitinyl-[acceptor protein]-L-lysine.. The protein operates within protein modification; protein ubiquitination. In terms of biological role, E3 ubiquitin-protein ligase involved in DNA damage response by promoting DNA resection and homologous recombination. Recruited to sites of double-strand breaks following DNA damage and specifically promotes double-strand break repair via homologous recombination. Two different, non-exclusive, mechanisms have been proposed. According to a report, regulates the choice of double-strand break repair by favoring homologous recombination over non-homologous end joining (NHEJ): acts by mediating ubiquitination of XRCC5/Ku80, leading to remove the Ku complex from DNA breaks, thereby promoting homologous recombination. According to another report, cooperates with UBE2Ds E2 ubiquitin ligases (UBE2D1, UBE2D2, UBE2D3 or UBE2D4) to promote homologous recombination by mediating ubiquitination of RBBP8/CtIP. Together with NLK, involved in the ubiquitination and degradation of TCF/LEF. Also exhibits auto-ubiquitination activity in combination with UBE2K. May act as a negative regulator in the Wnt/beta-catenin-mediated signaling pathway. The chain is E3 ubiquitin-protein ligase RNF138 from Mus musculus (Mouse).